The primary structure comprises 579 residues: MGRPGRKPRGRARPGLFPFPKEELRQGGSSPANLNAMSKGPVSFKDVTVDFTQEEWQRLDPAQKALYRDVMLENYCHFISVGFHITKPDMIRKLEQGEELWTERIFPSQSYLEEEEVLVKFSDYQDKPPKSIVIIKHKKLIKERSSVYGEALGKNRVVSKTLFEYKSDGKVLKNISEFISRDINPAMGKLGGSKEWEGSILTSKQEKTHPASILHKQIGRALSSEWDLAQHQKTQIPEQRFEYNKCDSSFLMTGVEFPHGRAHRGGGNFNYSKDDITLFEKSDLGIHPHDLMEKKCSSYNKYGELLCRKSVFVMHPSSQMDERPFQCPYCGNSFRRKSYLIEHERIHTGEKPYICCQCGRAFRQKTALTLHEKTHTEGKPYLCVDCGKSFRQKATLTRHHKAHTGEKAYECTQCGSAFGKKSYLIDHQRTHTGEKPYQCTECGKAFIQKTTLTVHQRTHTGEKPYICSECGKSFCQKTTLTLHQRIHTGEKPYICSDCGKSFRQKAILTVHYRIHTGEKSNGCPQCGKAFSRKSNLIRHQKIHTGEKPYECQECGKFFSCKSNLITHQKTHKTETMRFQ.

Positions 1 to 12 (MGRPGRKPRGRA) are enriched in basic residues. Positions 1–37 (MGRPGRKPRGRARPGLFPFPKEELRQGGSSPANLNAM) are disordered. Positions 12-135 (ARPGLFPFPK…DKPPKSIVII (124 aa)) are mediates interaction with TRIM28. Residues 27-36 (GGSSPANLNA) show a composition bias toward polar residues. 2 represses transcription regions span residues 40-81 (GPVS…FISV) and 105-240 (IFPS…PEQR). In terms of domain architecture, KRAB spans 42–113 (VSFKDVTVDF…RIFPSQSYLE (72 aa)). The segment at 241–263 (FEYNKCDSSFLMTGVEFPHGRAH) adopts a C2H2-type 1; degenerate zinc-finger fold. C2H2-type zinc fingers lie at residues 325 to 347 (FQCP…ERIH), 353 to 375 (YICC…EKTH), 381 to 403 (YLCV…HKAH), 409 to 431 (YECT…QRTH), 437 to 459 (YQCT…QRTH), 465 to 487 (YICS…QRIH), 493 to 515 (YICS…YRIH), 521 to 543 (NGCP…QKIH), and 549 to 571 (YECQ…QKTH). A required for transcriptional repression activity; probably mediates sequence-specific DNA-binding region spans residues 325-579 (FQCPYCGNSF…THKTETMRFQ (255 aa)).

It belongs to the krueppel C2H2-type zinc-finger protein family. Interacts with TRIM28; enhances the transcriptional repressor activity.

It is found in the nucleus. In terms of biological role, functions as a sequence-specific transcriptional repressor. This chain is Zinc finger protein 382 (Znf382), found in Mus musculus (Mouse).